The primary structure comprises 446 residues: Argininosuccinate synthase (446 aa).

ATP is bound by residues 17 to 25 and Ala-43; that span reads AFSGGLDTS. Tyr-99 lines the L-citrulline pocket. Residues Gly-129 and Thr-131 each contribute to the ATP site. Residues Thr-131, Asn-135, and Asp-136 each contribute to the L-aspartate site. Asn-135 contributes to the L-citrulline binding site. An ATP-binding site is contributed by Asp-136. 2 residues coordinate L-citrulline: Arg-139 and Ser-192. Asp-194 provides a ligand contact to ATP. 3 residues coordinate L-citrulline: Thr-201, Glu-203, and Glu-280.

It belongs to the argininosuccinate synthase family. Type 2 subfamily. As to quaternary structure, homotetramer.

It localises to the cytoplasm. It catalyses the reaction L-citrulline + L-aspartate + ATP = 2-(N(omega)-L-arginino)succinate + AMP + diphosphate + H(+). The protein operates within amino-acid biosynthesis; L-arginine biosynthesis; L-arginine from L-ornithine and carbamoyl phosphate: step 2/3. The protein is Argininosuccinate synthase of Burkholderia thailandensis (strain ATCC 700388 / DSM 13276 / CCUG 48851 / CIP 106301 / E264).